A 260-amino-acid polypeptide reads, in one-letter code: Small ribosomal subunit protein cS22 (260 aa).

Residues 1 to 62 (MATISSILPC…TNPPLLKVRA (62 aa)) constitute a chloroplast transit peptide. Positions 63-78 (VVTEETSSSSTASSSS) are enriched in low complexity. Residues 63–83 (VVTEETSSSSTASSSSDGEGA) are disordered. RRM domains lie at 84–162 (RRLY…ITEK) and 184–260 (YKVY…VNKA).

As to quaternary structure, component of the chloroplast small ribosomal subunit (SSU). Mature 70S chloroplast ribosomes of higher plants consist of a small (30S) and a large (50S) subunit. The 30S small subunit contains 1 molecule of ribosomal RNA (16S rRNA) and 24 different proteins. The 50S large subunit contains 3 rRNA molecules (23S, 5S and 4.5S rRNA) and 33 different proteins.

It is found in the plastid. The protein localises to the chloroplast. Functionally, component of the chloroplast ribosome (chloro-ribosome), a dedicated translation machinery responsible for the synthesis of chloroplast genome-encoded proteins, including proteins of the transcription and translation machinery and components of the photosynthetic apparatus. cS22 may have a role in the recruitment of stored chloroplast mRNAs for active protein synthesis. This Spinacia oleracea (Spinach) protein is Small ribosomal subunit protein cS22 (PSRP2).